A 287-amino-acid chain; its full sequence is MTFSEIILTLQSYWREQGCVILQPYDMPAGAGTYHQATFLRSLGPKPWATAYVAPSRRPTDGRYGENPNRLGAYYQFQVLIKPSPENIQELYLKSLERLGLDLKKHDIRFVEDNWESPTLGAWGLGWEVWLDGMEVTQFTYFQQVGGIACELISGEITYGLERLAMYLQDIDNVYDIVWDDKNGVVTYGDVHKQGEYEWSKYNFEIADTAMLFNQFENAFKECKRCLEAKISLPAYDYCMLAAHTFNVLDARGAISVTQRQEHILKIRELTKECALTYKASLEEKGE.

This sequence belongs to the class-II aminoacyl-tRNA synthetase family. Tetramer of two alpha and two beta subunits.

It is found in the cytoplasm. The catalysed reaction is tRNA(Gly) + glycine + ATP = glycyl-tRNA(Gly) + AMP + diphosphate. The sequence is that of Glycine--tRNA ligase alpha subunit from Campylobacter curvus (strain 525.92).